Here is a 286-residue protein sequence, read N- to C-terminus: Bifunctional protein FolD (286 aa).

Residues 166–168 (GAS) and Ile232 each bind NADP(+).

It belongs to the tetrahydrofolate dehydrogenase/cyclohydrolase family. As to quaternary structure, homodimer.

The catalysed reaction is (6R)-5,10-methylene-5,6,7,8-tetrahydrofolate + NADP(+) = (6R)-5,10-methenyltetrahydrofolate + NADPH. It catalyses the reaction (6R)-5,10-methenyltetrahydrofolate + H2O = (6R)-10-formyltetrahydrofolate + H(+). Its pathway is one-carbon metabolism; tetrahydrofolate interconversion. Catalyzes the oxidation of 5,10-methylenetetrahydrofolate to 5,10-methenyltetrahydrofolate and then the hydrolysis of 5,10-methenyltetrahydrofolate to 10-formyltetrahydrofolate. In Blochmanniella pennsylvanica (strain BPEN), this protein is Bifunctional protein FolD.